The chain runs to 178 residues: Methyltransferase flvH (178 aa).

A Post-SET domain is found at 120–136; the sequence is QPFNCFCGSQNCLGLIA. Zn(2+)-binding residues include Cys-124, Cys-126, and Cys-131.

This sequence belongs to the class V-like SAM-binding methyltransferase superfamily.

It catalyses the reaction L-lysine + 2 S-adenosyl-L-methionine = N(6),N(6)-dimethyl-L-lysine + 2 S-adenosyl-L-homocysteine + 2 H(+). It participates in secondary metabolite biosynthesis; terpenoid biosynthesis. In terms of biological role, methyltransferase; part of the gene cluster that mediates the biosynthesis of flavunoidine, an alkaloidal terpenoid with a tetracyclic cage-like core connected to dimethylcadaverine via a C-N bond and acylated with 5,5-dimethyl-L-pipecolate. The tetracyclic core is synthesized by the terpene cyclase flvE and the cytochrome P450 monooxygenase flvD. The terpene cyclase flvE catalyzes the cyclization of farnesyl pyrophosphate (FPP) to form (1R,4R,5S)-(+)-acoradiene and the cytochrome P450 monooxygenase flvD is then responsible for oxidative conversion of (1R,4R,5S)-(+)-acoradiene into the tetracyclic cage present in the final product flavunoidine. In parallel, the N-methyltransferase flvH dimethylates L-lysine to give N,N-dimethyl-L-Lysin which is decarboxylated by flvG to afford dimethylcadaverine. The terpene cyclase-like protein flvF is the enzyme that attaches the dimethylcadaverine precusor at the C-7 of the tetracyclic cage to yield pre-flavunoidine. The cytochrome monooxygenase flvC hydroxylates the C-10 position of pre-flavunoidine whereas the NRPS flvI acylates the terpenoid core at the hydroxylated C-10 with dimethylpipecolate to yield final flavunoidine. The bifunctional enzyme flvA and the dehydrogenase flvB are responsible for the synthesis of the dimethylpipecolate precursor. The PLP-dependent lyase domain of flvA might use L-O-acetyl-homoserine and alpha-keto-isovalerate to form an intermediary ketone that can cyclize intramolecularly to yield an imine. The imine can be reduced by flvB to yield the 6-carboxylated pipecolate. The C-terminal alpha-KG-dependent oxygenase domain of flvA is then proposed to catalyze the decarboxylation to yield dimethylpipecolate. The chain is Methyltransferase flvH from Aspergillus flavus (strain ATCC 200026 / FGSC A1120 / IAM 13836 / NRRL 3357 / JCM 12722 / SRRC 167).